A 31-amino-acid chain; its full sequence is Protamine-YI (31 aa).

The disordered stretch occupies residues 1 to 31 (ARRRRSSSRPIRRRRPRRRTTRRRRAGRRRR).

As to expression, testis.

The protein localises to the nucleus. It localises to the chromosome. In terms of biological role, protamines substitute for histones in the chromatin of sperm during the haploid phase of spermatogenesis. They compact sperm DNA into a highly condensed, stable and inactive complex. The chain is Protamine-YI from Clupea harengus (Atlantic herring).